We begin with the raw amino-acid sequence, 372 residues long: 18-hydroxynorfluorocurarine reductase (372 aa).

Positions 47, 50, 69, 70, 100, 103, 106, 114, and 172 each coordinate Zn(2+). NADP(+) is bound by residues 197–202 (GLGGIG), K226, 283–285 (LGA), S307, and R354.

Belongs to the zinc-containing alcohol dehydrogenase family. Homodimer. Zn(2+) is required as a cofactor. In terms of tissue distribution, mainly expressed in roots.

It catalyses the reaction (19E)-cur-19-en-17-al + NADP(+) = norfluorocurarine + NADPH + H(+). It carries out the reaction 17,18-epoxy-17-hydroxycur-19-ene + NADP(+) = 18-hydroxynorfluorocurarine + NADPH + H(+). The protein operates within alkaloid biosynthesis. In terms of biological role, alcohol dehydrogenase involved in the biosynthesis of curare monoterpene indole alkaloids (MIAs), natural products such as strychnine, a neurotoxic compound used as a pesticide to control rodents, and its pharmacologically active derivatives, including brucine, used to regulate blood pressure. Curare alkaloids act as animal glycine receptor antagonists. Catalyzes the conversion of norfluorocurarine to desoxy Wieland-Gumlich aldehyde, and of 18-OH norfluorocurarine to Wieland-Gumlich aldehyde. This Strychnos nux-vomica (Poison nut) protein is 18-hydroxynorfluorocurarine reductase.